The sequence spans 63 residues: Protein BP4A (63 aa).

In terms of tissue distribution, pollen specific.

This Brassica napus (Rape) protein is Protein BP4A (BP4A).